The primary structure comprises 144 residues: Cytochrome c oxidase subunit 4 isoform 1, mitochondrial (144 aa).

Over 1–73 the chain is Mitochondrial matrix; the sequence is SVVKSEDFTL…SFAEMNRRSN (73 aa). Lys-4 is modified (N6-acetyllysine; alternate). Lys-4 is modified (N6-succinyllysine; alternate). Lys-28 carries the N6-acetyllysine modification. 2 positions are modified to phosphoserine: Ser-31 and Ser-33. Lys-35 is subject to N6-acetyllysine; alternate. Lys-35 is modified (N6-succinyllysine; alternate). An N6-acetyllysine modification is found at Lys-42. The chain crosses the membrane as a helical span at residues 74–99; the sequence is EWKTVVGTAMFFFGITALIVMWEKRY. The Mitochondrial intermembrane portion of the chain corresponds to 100–144; it reads VYGPLPQTFDKEWVAMQTKRMLDMKVNPIQGLASKWDYEKNEWKK.

This sequence belongs to the cytochrome c oxidase IV family. In terms of assembly, component of the cytochrome c oxidase (complex IV, CIV), a multisubunit enzyme composed of 14 subunits. The complex is composed of a catalytic core of 3 subunits MT-CO1, MT-CO2 and MT-CO3, encoded in the mitochondrial DNA, and 11 supernumerary subunits COX4I, COX5A, COX5B, COX6A, COX6B, COX6C, COX7A, COX7B, COX7C, COX8 and NDUFA4, which are encoded in the nuclear genome. The complex exists as a monomer or a dimer and forms supercomplexes (SCs) in the inner mitochondrial membrane with NADH-ubiquinone oxidoreductase (complex I, CI) and ubiquinol-cytochrome c oxidoreductase (cytochrome b-c1 complex, complex III, CIII), resulting in different assemblies (supercomplex SCI(1)III(2)IV(1) and megacomplex MCI(2)III(2)IV(2)). Interacts with PHB2; the interaction decreases in absence of SPHK2. Interacts with AFG1L. Interacts with ABCB7; this interaction allows the regulation of cellular iron homeostasis and cellular reactive oxygen species (ROS) levels in cardiomyocytes. Interacts with FLVCR2; this interaction occurs in the absence of heme and is disrupted upon heme binding. Interacts with IRGC.

It is found in the mitochondrion inner membrane. It participates in energy metabolism; oxidative phosphorylation. Functionally, component of the cytochrome c oxidase, the last enzyme in the mitochondrial electron transport chain which drives oxidative phosphorylation. The respiratory chain contains 3 multisubunit complexes succinate dehydrogenase (complex II, CII), ubiquinol-cytochrome c oxidoreductase (cytochrome b-c1 complex, complex III, CIII) and cytochrome c oxidase (complex IV, CIV), that cooperate to transfer electrons derived from NADH and succinate to molecular oxygen, creating an electrochemical gradient over the inner membrane that drives transmembrane transport and the ATP synthase. Cytochrome c oxidase is the component of the respiratory chain that catalyzes the reduction of oxygen to water. Electrons originating from reduced cytochrome c in the intermembrane space (IMS) are transferred via the dinuclear copper A center (CU(A)) of subunit 2 and heme A of subunit 1 to the active site in subunit 1, a binuclear center (BNC) formed by heme A3 and copper B (CU(B)). The BNC reduces molecular oxygen to 2 water molecules using 4 electrons from cytochrome c in the IMS and 4 protons from the mitochondrial matrix. This is Cytochrome c oxidase subunit 4 isoform 1, mitochondrial (COX4I1) from Theropithecus gelada (Gelada baboon).